Consider the following 942-residue polypeptide: Inter alpha-trypsin inhibitor, heavy chain 4 (942 aa).

The N-terminal stretch at 1–28 (MKSPAPAHMWNLVLFLPSLLAVLPTTTA) is a signal peptide. The VIT domain occupies 29–148 (EKNGIDIYSL…KITFELIYQE (120 aa)). A glycan (N-linked (GlcNAc...) asparagine) is linked at N81. Positions 274–457 (NVIFVIDKSG…LQLQDFYHEV (184 aa)) constitute a VWFA domain. N-linked (GlcNAc...) asparagine glycosylation is found at N517 and N577. Positions 552–586 (TIQQQLEQRISASGAELEALEAQVLNLSLKYNFVT) form a coiled coil. Disordered stretches follow at residues 658–698 (RQYI…SDFS) and 726–745 (EKSK…HPQV). The segment covering 663–690 (PGFPGPPGPPGFPAPPGPPGFPAPPGPP) has biased composition (pro residues). T732 carries an O-linked (GalNAc...) threonine glycan. An intrachain disulfide couples C761 to C937. A glycan (N-linked (GlcNAc...) asparagine) is linked at N874.

Belongs to the ITIH family. In terms of assembly, interacts (via C-terminus) with DNAJC1 (via SANT 2 domain). May be O-glycosylated. N-glycosylated. Highly expressed in liver. Weak expression in lung and heart.

The protein resides in the secreted. Type II acute-phase protein (APP) involved in inflammatory responses to trauma. May also play a role in liver development or regeneration. This chain is Inter alpha-trypsin inhibitor, heavy chain 4 (Itih4), found in Mus musculus (Mouse).